A 423-amino-acid chain; its full sequence is Serine hydroxymethyltransferase (423 aa).

Residues Leu120 and 124–126 (GHL) contribute to the (6S)-5,6,7,8-tetrahydrofolate site. An N6-(pyridoxal phosphate)lysine modification is found at Lys229. A (6S)-5,6,7,8-tetrahydrofolate-binding site is contributed by 353-355 (SPF).

The protein belongs to the SHMT family. As to quaternary structure, homodimer. Pyridoxal 5'-phosphate is required as a cofactor.

It is found in the cytoplasm. The enzyme catalyses (6R)-5,10-methylene-5,6,7,8-tetrahydrofolate + glycine + H2O = (6S)-5,6,7,8-tetrahydrofolate + L-serine. Its pathway is one-carbon metabolism; tetrahydrofolate interconversion. It functions in the pathway amino-acid biosynthesis; glycine biosynthesis; glycine from L-serine: step 1/1. Functionally, catalyzes the reversible interconversion of serine and glycine with tetrahydrofolate (THF) serving as the one-carbon carrier. This reaction serves as the major source of one-carbon groups required for the biosynthesis of purines, thymidylate, methionine, and other important biomolecules. Also exhibits THF-independent aldolase activity toward beta-hydroxyamino acids, producing glycine and aldehydes, via a retro-aldol mechanism. This Prochlorococcus marinus (strain MIT 9301) protein is Serine hydroxymethyltransferase.